Consider the following 232-residue polypeptide: Small ribosomal subunit protein uS3 (232 aa).

The 69-residue stretch at 39-107 (IRAILHKELK…DVVINIVEIR (69 aa)) folds into the KH type-2 domain.

This sequence belongs to the universal ribosomal protein uS3 family. In terms of assembly, part of the 30S ribosomal subunit. Forms a tight complex with proteins S10 and S14.

Binds the lower part of the 30S subunit head. Binds mRNA in the 70S ribosome, positioning it for translation. This is Small ribosomal subunit protein uS3 from Rhodopseudomonas palustris (strain BisA53).